Here is a 132-residue protein sequence, read N- to C-terminus: S-protein homolog 8 (132 aa).

The N-terminal stretch at 1–20 (MHSLSWFLLVIGLSVGLSSG) is a signal peptide.

The protein belongs to the plant self-incompatibility (S1) protein family. In terms of tissue distribution, mostly expressed in seedlings, stems, leaves and floral tissues, and, to a lower extent, in roots.

The protein resides in the secreted. In Arabidopsis thaliana (Mouse-ear cress), this protein is S-protein homolog 8.